Consider the following 287-residue polypeptide: Uroplakin-3a (287 aa).

An N-terminal signal peptide occupies residues methionine 1–alanine 18. Topologically, residues valine 19 to glycine 207 are lumenal. N-linked (GlcNAc...) asparagine glycosylation is found at asparagine 74, asparagine 139, and asparagine 170. Residues methionine 208–valine 235 traverse the membrane as a helical segment. Residues aspartate 236–aspartate 287 are Cytoplasmic-facing. Residues glycine 242–aspartate 287 form a disordered region. A compositionally biased stretch (polar residues) spans alanine 261–asparagine 270.

This sequence belongs to the uroplakin-3 family. As to quaternary structure, heterodimer with uroplakin-1B (UPK1B). In terms of tissue distribution, expressed in ureter.

The protein resides in the endoplasmic reticulum membrane. Component of the asymmetric unit membrane (AUM); a highly specialized biomembrane elaborated by terminally differentiated urothelial cells. May play an important role in AUM-cytoskeleton interaction in terminally differentiated urothelial cells. It also contributes to the formation of urothelial glycocalyx which may play an important role in preventing bacterial adherence. In Homo sapiens (Human), this protein is Uroplakin-3a (UPK3A).